The primary structure comprises 101 residues: NADH-quinone oxidoreductase subunit K (101 aa).

3 helical membrane passes run 4–24, 29–49, and 61–81; these read LSDYLILSSVIFCIGLVGIFV, IITLLMCVELILVAVNTNFVA, and IFVFFILTVAAAEVAIGLAIL.

This sequence belongs to the complex I subunit 4L family. In terms of assembly, NDH-1 is composed of 14 different subunits. Subunits NuoA, H, J, K, L, M, N constitute the membrane sector of the complex.

It localises to the cell inner membrane. The catalysed reaction is a quinone + NADH + 5 H(+)(in) = a quinol + NAD(+) + 4 H(+)(out). Its function is as follows. NDH-1 shuttles electrons from NADH, via FMN and iron-sulfur (Fe-S) centers, to quinones in the respiratory chain. The immediate electron acceptor for the enzyme in this species is believed to be ubiquinone. Couples the redox reaction to proton translocation (for every two electrons transferred, four hydrogen ions are translocated across the cytoplasmic membrane), and thus conserves the redox energy in a proton gradient. This chain is NADH-quinone oxidoreductase subunit K, found in Ruthia magnifica subsp. Calyptogena magnifica.